A 329-amino-acid chain; its full sequence is Porphobilinogen deaminase (329 aa).

Cysteine 250 is modified (S-(dipyrrolylmethanemethyl)cysteine).

Belongs to the HMBS family. As to quaternary structure, monomer. Requires dipyrromethane as cofactor.

It carries out the reaction 4 porphobilinogen + H2O = hydroxymethylbilane + 4 NH4(+). The protein operates within porphyrin-containing compound metabolism; protoporphyrin-IX biosynthesis; coproporphyrinogen-III from 5-aminolevulinate: step 2/4. Its function is as follows. Tetrapolymerization of the monopyrrole PBG into the hydroxymethylbilane pre-uroporphyrinogen in several discrete steps. The polypeptide is Porphobilinogen deaminase (Burkholderia thailandensis (strain ATCC 700388 / DSM 13276 / CCUG 48851 / CIP 106301 / E264)).